A 597-amino-acid polypeptide reads, in one-letter code: Elongation factor 4 (597 aa).

A tr-type G domain is found at 2 to 184 (QHIRNFSIIA…SIVARVPPPK (183 aa)). Residues 14–19 (DHGKST) and 131–134 (NKMD) contribute to the GTP site.

It belongs to the TRAFAC class translation factor GTPase superfamily. Classic translation factor GTPase family. LepA subfamily.

Its subcellular location is the cell inner membrane. It carries out the reaction GTP + H2O = GDP + phosphate + H(+). Required for accurate and efficient protein synthesis under certain stress conditions. May act as a fidelity factor of the translation reaction, by catalyzing a one-codon backward translocation of tRNAs on improperly translocated ribosomes. Back-translocation proceeds from a post-translocation (POST) complex to a pre-translocation (PRE) complex, thus giving elongation factor G a second chance to translocate the tRNAs correctly. Binds to ribosomes in a GTP-dependent manner. The sequence is that of Elongation factor 4 from Bordetella bronchiseptica (strain ATCC BAA-588 / NCTC 13252 / RB50) (Alcaligenes bronchisepticus).